Reading from the N-terminus, the 207-residue chain is Guanylate kinase (207 aa).

The Guanylate kinase-like domain maps to G4–R184. A11–S18 provides a ligand contact to ATP.

It belongs to the guanylate kinase family.

Its subcellular location is the cytoplasm. It catalyses the reaction GMP + ATP = GDP + ADP. Functionally, essential for recycling GMP and indirectly, cGMP. This is Guanylate kinase from Escherichia coli O157:H7.